Consider the following 326-residue polypeptide: tRNA-dihydrouridine(20/20a) synthase (326 aa).

Residues 11-13 (PML) and Gln63 contribute to the FMN site. Cys93 acts as the Proton donor in catalysis. FMN contacts are provided by residues Lys132, His165, 205-207 (NGG), and 227-228 (GR).

The protein belongs to the Dus family. DusA subfamily. It depends on FMN as a cofactor.

It catalyses the reaction 5,6-dihydrouridine(20) in tRNA + NADP(+) = uridine(20) in tRNA + NADPH + H(+). The catalysed reaction is 5,6-dihydrouridine(20) in tRNA + NAD(+) = uridine(20) in tRNA + NADH + H(+). The enzyme catalyses 5,6-dihydrouridine(20a) in tRNA + NADP(+) = uridine(20a) in tRNA + NADPH + H(+). It carries out the reaction 5,6-dihydrouridine(20a) in tRNA + NAD(+) = uridine(20a) in tRNA + NADH + H(+). Its function is as follows. Catalyzes the synthesis of 5,6-dihydrouridine (D), a modified base found in the D-loop of most tRNAs, via the reduction of the C5-C6 double bond in target uridines. Specifically modifies U20 and U20a in tRNAs. The chain is tRNA-dihydrouridine(20/20a) synthase from Vibrio vulnificus (strain CMCP6).